The chain runs to 231 residues: Orotidine 5'-phosphate decarboxylase (231 aa).

Residues Asp11, Lys34, 61–70 (DLKLHDIPNT), Thr117, Arg179, Gln188, Gly208, and Arg209 each bind substrate. Lys63 functions as the Proton donor in the catalytic mechanism.

Belongs to the OMP decarboxylase family. Type 1 subfamily. Homodimer.

It carries out the reaction orotidine 5'-phosphate + H(+) = UMP + CO2. It participates in pyrimidine metabolism; UMP biosynthesis via de novo pathway; UMP from orotate: step 2/2. Functionally, catalyzes the decarboxylation of orotidine 5'-monophosphate (OMP) to uridine 5'-monophosphate (UMP). In Streptococcus thermophilus (strain CNRZ 1066), this protein is Orotidine 5'-phosphate decarboxylase.